Reading from the N-terminus, the 152-residue chain is Deoxyuridine 5'-triphosphate nucleotidohydrolase (152 aa).

Residues 70–72 (RSG), asparagine 83, 87–89 (TID), and lysine 97 each bind substrate.

Belongs to the dUTPase family. Requires Mg(2+) as cofactor.

The catalysed reaction is dUTP + H2O = dUMP + diphosphate + H(+). It functions in the pathway pyrimidine metabolism; dUMP biosynthesis; dUMP from dCTP (dUTP route): step 2/2. This enzyme is involved in nucleotide metabolism: it produces dUMP, the immediate precursor of thymidine nucleotides and it decreases the intracellular concentration of dUTP so that uracil cannot be incorporated into DNA. The chain is Deoxyuridine 5'-triphosphate nucleotidohydrolase from Corynebacterium diphtheriae (strain ATCC 700971 / NCTC 13129 / Biotype gravis).